Consider the following 344-residue polypeptide: HTH-type transcriptional regulator XC_2801 (344 aa).

Positions 3-60 constitute an HTH lysR-type domain; it reads HDLNDTLIFVKVVEQGSFIAAANSLGLPKTTVSRKVQELETRLGARLLHRTTRRIGLT. Positions 20–39 form a DNA-binding region, H-T-H motif; the sequence is FIAAANSLGLPKTTVSRKVQ.

The protein belongs to the LysR transcriptional regulatory family. Interacts with the cyclic di-GMP effector XC_3703.

Its activity is regulated as follows. Activity is regulated by cyclic di-GMP. Cyclic di-GMP specifically binds to XC_3703, which inhibits the interaction of the XC_2801-XC_3703 complex with DNA and prevents the transcription of the target genes. Transcriptional regulator that directly or indirectly regulates the expression of virulence-related genes, including flhB, aaeA, fliL and flgG. Binds to the promoter of the target genes only in the presence of XC_3703. In Xanthomonas campestris pv. campestris (strain 8004), this protein is HTH-type transcriptional regulator XC_2801.